The primary structure comprises 266 residues: Putative carbamate hydrolase RutD (266 aa).

Belongs to the AB hydrolase superfamily. Hydrolase RutD family.

The enzyme catalyses carbamate + 2 H(+) = NH4(+) + CO2. Its function is as follows. Involved in pyrimidine catabolism. May facilitate the hydrolysis of carbamate, a reaction that can also occur spontaneously. This chain is Putative carbamate hydrolase RutD, found in Acinetobacter baylyi (strain ATCC 33305 / BD413 / ADP1).